The chain runs to 404 residues: Glucose-1-phosphate adenylyltransferase (404 aa).

Residues Tyr-99, Gly-164, 179–180, and Ser-197 each bind alpha-D-glucose 1-phosphate; that span reads EK.

This sequence belongs to the bacterial/plant glucose-1-phosphate adenylyltransferase family.

It carries out the reaction alpha-D-glucose 1-phosphate + ATP + H(+) = ADP-alpha-D-glucose + diphosphate. It participates in capsule biogenesis; capsule polysaccharide biosynthesis. It functions in the pathway glycan biosynthesis; glycogen biosynthesis. Functionally, involved in the biosynthesis of ADP-glucose, a building block, required in the biosynthesis of maltose-1-phosphate (M1P) and in the elongation reactions to produce linear alpha-1,4-glucans. Catalyzes the reaction between ATP and alpha-D-glucose 1-phosphate (G1P) to produce pyrophosphate and ADP-Glc. In Mycobacterium leprae (strain Br4923), this protein is Glucose-1-phosphate adenylyltransferase.